Reading from the N-terminus, the 313-residue chain is UDP-N-acetylenolpyruvoylglucosamine reductase (313 aa).

The 177-residue stretch at 31 to 207 folds into the FAD-binding PCMH-type domain; it reads VGGPADALVA…TGVDLGLGFD (177 aa). The active site involves arginine 180. The active-site Proton donor is the cysteine 236. Glutamate 307 is a catalytic residue.

It belongs to the MurB family. Requires FAD as cofactor.

It is found in the cytoplasm. It carries out the reaction UDP-N-acetyl-alpha-D-muramate + NADP(+) = UDP-N-acetyl-3-O-(1-carboxyvinyl)-alpha-D-glucosamine + NADPH + H(+). It functions in the pathway cell wall biogenesis; peptidoglycan biosynthesis. Cell wall formation. This chain is UDP-N-acetylenolpyruvoylglucosamine reductase, found in Desulfosudis oleivorans (strain DSM 6200 / JCM 39069 / Hxd3) (Desulfococcus oleovorans).